The primary structure comprises 145 residues: MAKKITGYIRLQIKAGEANPSPPVGPALGQHGVNIREFCESFNTATKNIEKGLPTPVIITVYADRTFSFITKTPPASILLKKFVLKGKSGSARPNTEKVGKATRQQLEEIAKMKTPDLTAADLEAAIRTIAGTARSMGIDVEGVE.

It belongs to the universal ribosomal protein uL11 family. In terms of assembly, part of the ribosomal stalk of the 50S ribosomal subunit. Interacts with L10 and the large rRNA to form the base of the stalk. L10 forms an elongated spine to which L12 dimers bind in a sequential fashion forming a multimeric L10(L12)X complex. In terms of processing, one or more lysine residues are methylated.

In terms of biological role, forms part of the ribosomal stalk which helps the ribosome interact with GTP-bound translation factors. This Coxiella burnetii (strain Dugway 5J108-111) protein is Large ribosomal subunit protein uL11.